Reading from the N-terminus, the 568-residue chain is 2-succinyl-5-enolpyruvyl-6-hydroxy-3-cyclohexene-1-carboxylate synthase (568 aa).

This sequence belongs to the TPP enzyme family. MenD subfamily. In terms of assembly, homodimer. The cofactor is Mg(2+). It depends on Mn(2+) as a cofactor. Thiamine diphosphate is required as a cofactor.

It carries out the reaction isochorismate + 2-oxoglutarate + H(+) = 5-enolpyruvoyl-6-hydroxy-2-succinyl-cyclohex-3-ene-1-carboxylate + CO2. It functions in the pathway quinol/quinone metabolism; 1,4-dihydroxy-2-naphthoate biosynthesis; 1,4-dihydroxy-2-naphthoate from chorismate: step 2/7. Its pathway is quinol/quinone metabolism; menaquinone biosynthesis. Its function is as follows. Catalyzes the thiamine diphosphate-dependent decarboxylation of 2-oxoglutarate and the subsequent addition of the resulting succinic semialdehyde-thiamine pyrophosphate anion to isochorismate to yield 2-succinyl-5-enolpyruvyl-6-hydroxy-3-cyclohexene-1-carboxylate (SEPHCHC). The polypeptide is 2-succinyl-5-enolpyruvyl-6-hydroxy-3-cyclohexene-1-carboxylate synthase (Actinobacillus pleuropneumoniae serotype 5b (strain L20)).